Reading from the N-terminus, the 657-residue chain is 1-deoxy-D-xylulose-5-phosphate synthase (657 aa).

Residues H73 and 113-115 (SHA) contribute to the thiamine diphosphate site. Residue D145 participates in Mg(2+) binding. Residues 146 to 147 (GA), N175, Y293, and E375 contribute to the thiamine diphosphate site. N175 contributes to the Mg(2+) binding site.

It belongs to the transketolase family. DXPS subfamily. Homodimer. Requires Mg(2+) as cofactor. Thiamine diphosphate serves as cofactor.

It catalyses the reaction D-glyceraldehyde 3-phosphate + pyruvate + H(+) = 1-deoxy-D-xylulose 5-phosphate + CO2. It functions in the pathway metabolic intermediate biosynthesis; 1-deoxy-D-xylulose 5-phosphate biosynthesis; 1-deoxy-D-xylulose 5-phosphate from D-glyceraldehyde 3-phosphate and pyruvate: step 1/1. Its function is as follows. Catalyzes the acyloin condensation reaction between C atoms 2 and 3 of pyruvate and glyceraldehyde 3-phosphate to yield 1-deoxy-D-xylulose-5-phosphate (DXP). The chain is 1-deoxy-D-xylulose-5-phosphate synthase from Pseudarthrobacter chlorophenolicus (strain ATCC 700700 / DSM 12829 / CIP 107037 / JCM 12360 / KCTC 9906 / NCIMB 13794 / A6) (Arthrobacter chlorophenolicus).